Consider the following 781-residue polypeptide: Acyl-CoA dehydrogenase family member 11 (781 aa).

K177 bears the N6-acetyllysine mark. Position 325 is a phosphotyrosine (Y325). K392 is subject to N6-succinyllysine. Residues 505–515 (FCMTEPDVASS), 513–515 (ASS), 539–541 (WSS), and S541 contribute to the FAD site. S515 lines the substrate pocket. 630–633 (GPGR) lines the substrate pocket. Residues R658, Q728, and 728–732 (QVCGG) contribute to the FAD site. G756 provides a ligand contact to substrate. Residues 757-759 (PDE) and E759 each bind FAD.

It belongs to the acyl-CoA dehydrogenase family. In terms of assembly, homodimer. It depends on FAD as a cofactor.

Its subcellular location is the peroxisome. The protein localises to the mitochondrion membrane. The catalysed reaction is a 2,3-saturated acyl-CoA + oxidized [electron-transfer flavoprotein] + H(+) = a (2E)-enoyl-CoA + reduced [electron-transfer flavoprotein]. It carries out the reaction docosanoyl-CoA + oxidized [electron-transfer flavoprotein] + H(+) = (2E)-docosenoyl-CoA + reduced [electron-transfer flavoprotein]. It catalyses the reaction tetracosanoyl-CoA + oxidized [electron-transfer flavoprotein] + H(+) = (2E)-tetracosenoyl-CoA + reduced [electron-transfer flavoprotein]. The enzyme catalyses eicosanoyl-CoA + oxidized [electron-transfer flavoprotein] + H(+) = (2E)-eicosenoyl-CoA + reduced [electron-transfer flavoprotein]. The catalysed reaction is hexacosanoyl-CoA + oxidized [electron-transfer flavoprotein] + H(+) = (2E)-hexacosenoyl-CoA + reduced [electron-transfer flavoprotein]. It carries out the reaction tricosanoyl-CoA + oxidized [electron-transfer flavoprotein] + H(+) = (2E)-tricosenoyl-CoA + reduced [electron-transfer flavoprotein]. The protein operates within lipid metabolism; fatty acid beta-oxidation. Its function is as follows. Acyl-CoA dehydrogenase, that exhibits maximal activity towards saturated C22-CoA. Probably participates in beta-oxydation and energy production but could also play a role in the metabolism of specific fatty acids to control fatty acids composition of cellular lipids in brain. The sequence is that of Acyl-CoA dehydrogenase family member 11 (ACAD11) from Pongo abelii (Sumatran orangutan).